A 228-amino-acid polypeptide reads, in one-letter code: Urease accessory protein UreG (228 aa).

34–41 (GPVGSGKT) is a GTP binding site.

The protein belongs to the SIMIBI class G3E GTPase family. UreG subfamily. Homodimer. UreD, UreF and UreG form a complex that acts as a GTP-hydrolysis-dependent molecular chaperone, activating the urease apoprotein by helping to assemble the nickel containing metallocenter of UreC. The UreE protein probably delivers the nickel.

The protein localises to the cytoplasm. In terms of biological role, facilitates the functional incorporation of the urease nickel metallocenter. This process requires GTP hydrolysis, probably effectuated by UreG. The protein is Urease accessory protein UreG of Rhodococcus opacus (strain B4).